Here is a 101-residue protein sequence, read N- to C-terminus: Large ribosomal subunit protein bL28 (101 aa).

Belongs to the bacterial ribosomal protein bL28 family.

The polypeptide is Large ribosomal subunit protein bL28 (Methylorubrum extorquens (strain CM4 / NCIMB 13688) (Methylobacterium extorquens)).